The sequence spans 296 residues: Porphobilinogen deaminase (296 aa).

Position 232 is an S-(dipyrrolylmethanemethyl)cysteine (Cys232).

The protein belongs to the HMBS family. Monomer. Dipyrromethane serves as cofactor.

It catalyses the reaction 4 porphobilinogen + H2O = hydroxymethylbilane + 4 NH4(+). It participates in porphyrin-containing compound metabolism; protoporphyrin-IX biosynthesis; coproporphyrinogen-III from 5-aminolevulinate: step 2/4. Its function is as follows. Tetrapolymerization of the monopyrrole PBG into the hydroxymethylbilane pre-uroporphyrinogen in several discrete steps. The protein is Porphobilinogen deaminase of Corynebacterium aurimucosum (strain ATCC 700975 / DSM 44827 / CIP 107346 / CN-1) (Corynebacterium nigricans).